Reading from the N-terminus, the 232-residue chain is Ribonuclease 3 (232 aa).

One can recognise an RNase III domain in the interval 6–133 (FNDIENRLGV…VIAAVYLDKG (128 aa)). Glu46 lines the Mg(2+) pocket. Asp50 is an active-site residue. 2 residues coordinate Mg(2+): Asp119 and Glu122. Glu122 is an active-site residue. The 70-residue stretch at 160 to 229 (DFKTKLQELL…AKEALKRLEK (70 aa)) folds into the DRBM domain.

This sequence belongs to the ribonuclease III family. Homodimer. The cofactor is Mg(2+).

Its subcellular location is the cytoplasm. It catalyses the reaction Endonucleolytic cleavage to 5'-phosphomonoester.. Digests double-stranded RNA. Involved in the processing of primary rRNA transcript to yield the immediate precursors to the large and small rRNAs (23S and 16S). Processes some mRNAs, and tRNAs when they are encoded in the rRNA operon. Processes pre-crRNA and tracrRNA of type II CRISPR loci if present in the organism. The polypeptide is Ribonuclease 3 (Clostridium botulinum (strain Eklund 17B / Type B)).